The following is a 195-amino-acid chain: Ras-related protein Rab-31 (195 aa).

Residues glycine 16, glycine 18, lysine 19, serine 20, serine 21, aspartate 32, and histidine 33 each coordinate GTP. Serine 20 is a binding site for Mg(2+). Short sequence motifs (switch) lie at residues 30–42 (HFDH…IGAS) and 63–79 (AGQE…YRGS). Position 36 is a phosphoserine (serine 36). GTP contacts are provided by threonine 38, glycine 64, asparagine 119, aspartate 122, alanine 150, and lysine 151. Threonine 38 is a binding site for Mg(2+). Residues 168-195 (PPLGPQENGNSGGIKLGNQSLQASRRCC) form a disordered region. The segment covering 184–195 (GNQSLQASRRCC) has biased composition (polar residues). 2 S-geranylgeranyl cysteine lipidation sites follow: cysteine 194 and cysteine 195.

It belongs to the small GTPase superfamily. Rab family. As to quaternary structure, interacts with OCRL. Interacts (in GDP-bound form) with RIN3 and GAPVD1, which function as guanine exchange factors (GEF). Interacts with EGFR. Interacts with NGFR. Interacts (in GTP-bound form) with EEA1. Interacts (in GTP-bound form) with APPL2; interaction contributes to or enhances recruitment of APPL2 to the phagosomes; interaction enhances Fc-gamma receptor-mediated phagocytosis through PI3K/Akt signaling in macrophages. Mg(2+) is required as a cofactor. In terms of tissue distribution, detected in brain astrocytes (at protein level).

The protein resides in the early endosome. It is found in the golgi apparatus. It localises to the trans-Golgi network. The protein localises to the trans-Golgi network membrane. Its subcellular location is the cytoplasmic vesicle. The protein resides in the phagosome. It is found in the phagosome membrane. It carries out the reaction GTP + H2O = GDP + phosphate + H(+). Its activity is regulated as follows. Regulated by guanine nucleotide exchange factors (GEFs) including RIN3 and GAPVD1 which promote the exchange of bound GDP for free GTP. Regulated by GTPase activating proteins (GAPs) which increase the GTP hydrolysis activity. Inhibited by GDP dissociation inhibitors (GDIs) which prevent Rab-GDP dissociation. In terms of biological role, the small GTPases Rab are key regulators of intracellular membrane trafficking, from the formation of transport vesicles to their fusion with membranes. Rabs cycle between an inactive GDP-bound form and an active GTP-bound form that is able to recruit to membranes different set of downstream effectors directly responsible for vesicle formation, movement, tethering and fusion. Required for the integrity and for normal function of the Golgi apparatus and the trans-Golgi network. Plays a role in insulin-stimulated translocation of GLUT4 to the cell membrane. Plays a role in the maturation of phagosomes that engulf pathogens, such as S.aureus and Mycobacterium. Plays a role in M6PR transport from the trans-Golgi network to endosomes. Plays a role in the internalization of EGFR from the cell membrane into endosomes. The polypeptide is Ras-related protein Rab-31 (Mus musculus (Mouse)).